Here is an 866-residue protein sequence, read N- to C-terminus: Transcription factor E2F8 (866 aa).

Phosphoserine is present on residues S71 and S102. 2 DNA-binding regions span residues 113-182 and 261-347; these read RKEK…TWHG and RKDK…KWTG. Disordered regions lie at residues 409–429, 532–632, and 794–837; these read RKINSAPSSPIKTHKAESTQN, TITP…STTL, and TNGQ…GSPC. Residues S413 and S417 each carry the phosphoserine modification. Over residues 543–552 the composition is skewed to polar residues; the sequence is VCPTTSSNAM. Basic and acidic residues-rich tracts occupy residues 588-603 and 612-624; these read QGAKNREREPAREKGS and SGSKKKFKEDQKA. Residues 794 to 805 show a composition bias toward polar residues; sequence TNGQSFAGTGAQ. Positions 825–834 are enriched in low complexity; it reads TPGGPTKPTG.

It belongs to the E2F/DP family. Homodimer and heterodimer: mainly forms homodimers and, to a lesser extent, heterodimers with E2F8. Dimerization is important for DNA-binding. Interacts with HIF1A.

It is found in the nucleus. Functionally, atypical E2F transcription factor that participates in various processes such as angiogenesis and polyploidization of specialized cells. Mainly acts as a transcription repressor that binds DNA independently of DP proteins and specifically recognizes the E2 recognition site 5'-TTTC[CG]CGC-3'. Directly represses transcription of classical E2F transcription factors such as E2F1: component of a feedback loop in S phase by repressing the expression of E2F1, thereby preventing p53/TP53-dependent apoptosis. Plays a key role in polyploidization of cells in placenta and liver by regulating the endocycle, probably by repressing genes promoting cytokinesis and antagonizing action of classical E2F proteins (E2F1, E2F2 and/or E2F3). Required for placental development by promoting polyploidization of trophoblast giant cells. Acts as a promoter of sprouting angiogenesis, possibly by acting as a transcription activator: associates with HIF1A, recognizes and binds the VEGFA promoter, which is different from canonical E2 recognition site, and activates expression of the VEGFA gene. This is Transcription factor E2F8 (E2F8) from Bos taurus (Bovine).